The primary structure comprises 177 residues: Chorismate pyruvate-lyase (177 aa).

Methionine 36, arginine 78, leucine 116, and glutamate 157 together coordinate substrate.

The protein belongs to the UbiC family. In terms of assembly, monomer.

Its subcellular location is the cytoplasm. It carries out the reaction chorismate = 4-hydroxybenzoate + pyruvate. The protein operates within cofactor biosynthesis; ubiquinone biosynthesis. Removes the pyruvyl group from chorismate, with concomitant aromatization of the ring, to provide 4-hydroxybenzoate (4HB) for the ubiquinone pathway. This chain is Chorismate pyruvate-lyase, found in Pectobacterium atrosepticum (strain SCRI 1043 / ATCC BAA-672) (Erwinia carotovora subsp. atroseptica).